The sequence spans 668 residues: Bifunctional polymyxin resistance protein ArnA (668 aa).

The interval 1 to 307 is formyltransferase ArnAFT; it reads MSNKAVVFAY…ELGLVDGSLL (307 aa). The active-site Proton donor; for formyltransferase activity is the histidine 106. (6R)-10-formyltetrahydrofolate-binding positions include arginine 116 and 138 to 142; that span reads VKRAD. The segment at 317–668 is dehydrogenase ArnADH; that stretch reads RRTRVLILGV…IADRAKQEAR (352 aa). Residues aspartate 350 and 371-372 contribute to the NAD(+) site; that span reads DI. UDP-alpha-D-glucuronate-binding positions include alanine 396, tyrosine 401, and 435–436; that span reads TS. Residue glutamate 437 is the Proton acceptor; for decarboxylase activity of the active site. UDP-alpha-D-glucuronate contacts are provided by residues arginine 463, asparagine 494, 528-537, and tyrosine 615; that span reads RLFDGGEQKR. Residue arginine 621 is the Proton donor; for decarboxylase activity of the active site.

In the N-terminal section; belongs to the Fmt family. UDP-L-Ara4N formyltransferase subfamily. It in the C-terminal section; belongs to the NAD(P)-dependent epimerase/dehydratase family. UDP-glucuronic acid decarboxylase subfamily. As to quaternary structure, homohexamer, formed by a dimer of trimers.

The enzyme catalyses UDP-alpha-D-glucuronate + NAD(+) = UDP-beta-L-threo-pentopyranos-4-ulose + CO2 + NADH. The catalysed reaction is UDP-4-amino-4-deoxy-beta-L-arabinose + (6R)-10-formyltetrahydrofolate = UDP-4-deoxy-4-formamido-beta-L-arabinose + (6S)-5,6,7,8-tetrahydrofolate + H(+). The protein operates within nucleotide-sugar biosynthesis; UDP-4-deoxy-4-formamido-beta-L-arabinose biosynthesis; UDP-4-deoxy-4-formamido-beta-L-arabinose from UDP-alpha-D-glucuronate: step 1/3. It participates in nucleotide-sugar biosynthesis; UDP-4-deoxy-4-formamido-beta-L-arabinose biosynthesis; UDP-4-deoxy-4-formamido-beta-L-arabinose from UDP-alpha-D-glucuronate: step 3/3. Its pathway is bacterial outer membrane biogenesis; lipopolysaccharide biosynthesis. Bifunctional enzyme that catalyzes the oxidative decarboxylation of UDP-glucuronic acid (UDP-GlcUA) to UDP-4-keto-arabinose (UDP-Ara4O) and the addition of a formyl group to UDP-4-amino-4-deoxy-L-arabinose (UDP-L-Ara4N) to form UDP-L-4-formamido-arabinose (UDP-L-Ara4FN). The modified arabinose is attached to lipid A and is required for resistance to polymyxin and cationic antimicrobial peptides. The sequence is that of Bifunctional polymyxin resistance protein ArnA from Pseudomonas fluorescens (strain ATCC BAA-477 / NRRL B-23932 / Pf-5).